A 189-amino-acid chain; its full sequence is Peptidyl-tRNA hydrolase (189 aa).

Residue Tyr14 coordinates tRNA. Catalysis depends on His19, which acts as the Proton acceptor. Residues Tyr64, Asn66, and Asn112 each contribute to the tRNA site.

Belongs to the PTH family. Monomer.

The protein resides in the cytoplasm. It catalyses the reaction an N-acyl-L-alpha-aminoacyl-tRNA + H2O = an N-acyl-L-amino acid + a tRNA + H(+). In terms of biological role, hydrolyzes ribosome-free peptidyl-tRNAs (with 1 or more amino acids incorporated), which drop off the ribosome during protein synthesis, or as a result of ribosome stalling. Catalyzes the release of premature peptidyl moieties from peptidyl-tRNA molecules trapped in stalled 50S ribosomal subunits, and thus maintains levels of free tRNAs and 50S ribosomes. The sequence is that of Peptidyl-tRNA hydrolase from Dehalococcoides mccartyi (strain CBDB1).